Consider the following 285-residue polypeptide: MRRVTLHCAARLVIAALWLLVEVCRAESGAQSLAERVIWAVNAGGDTHTDVHGIQFKKDPLEGKVGKASDYGVRLPILRSSPEDQILYQTERYNEDTFGYEVPIREEGDYILVMKYAEVYFAQSQQKVFDVRLNGHVVVKDLDIFDRVGHSTAHDEIVPFSIKRGKLSVHGEVSTFNGKLTVEFVKGYYDNPKICALYVMKGKLEDVPKLQPHPGLEKREEEEEEEEEGEGPEGEKKSASTSPKNPVRSGPRTPNPYATDNSSLMFPILVAFGVFIPTLFCLCRL.

Residues 1–26 (MRRVTLHCAARLVIAALWLLVEVCRA) form the signal peptide. At 27-262 (ESGAQSLAER…TPNPYATDNS (236 aa)) the chain is on the lumenal side. Residues tyrosine 71, tyrosine 93, tyrosine 120, phenylalanine 121, and aspartate 190 each coordinate a carbohydrate. Positions 209–258 (KLQPHPGLEKREEEEEEEEEGEGPEGEKKSASTSPKNPVRSGPRTPNPYA) are disordered. Over residues 220–232 (EEEEEEEEEGEGP) the composition is skewed to acidic residues. N-linked (GlcNAc...) asparagine glycosylation occurs at asparagine 261. Residues 263–283 (SLMFPILVAFGVFIPTLFCLC) traverse the membrane as a helical segment. The Cytoplasmic portion of the chain corresponds to 284 to 285 (RL).

It belongs to the malectin family.

It localises to the endoplasmic reticulum membrane. Functionally, carbohydrate-binding protein with a strong ligand preference for Glc2-N-glycan. May play a role in the early steps of protein N-glycosylation. This is Malectin from Danio rerio (Zebrafish).